The following is a 585-amino-acid chain: Protein-lysine N-methyltransferase EFM1 (585 aa).

Residues 23–281 (PKISFRITED…AQDELFNNYG (259 aa)) form the SET domain. Y280 serves as a coordination point for S-adenosyl-L-methionine.

This sequence belongs to the class V-like SAM-binding methyltransferase superfamily. RKM1 family.

It localises to the cytoplasm. Functionally, S-adenosyl-L-methionine-dependent protein-lysine N-methyltransferase that monomethylates elongation factor 1-alpha (TEF1/TEF2) at 'Lys-30'. This chain is Protein-lysine N-methyltransferase EFM1, found in Saccharomyces cerevisiae (strain ATCC 204508 / S288c) (Baker's yeast).